Here is a 127-residue protein sequence, read N- to C-terminus: DNA-directed RNA polymerase subunit omega (127 aa).

This sequence belongs to the RNA polymerase subunit omega family. The RNAP catalytic core consists of 2 alpha, 1 beta, 1 beta' and 1 omega subunit. When a sigma factor is associated with the core the holoenzyme is formed, which can initiate transcription.

It carries out the reaction RNA(n) + a ribonucleoside 5'-triphosphate = RNA(n+1) + diphosphate. Promotes RNA polymerase assembly. Latches the N- and C-terminal regions of the beta' subunit thereby facilitating its interaction with the beta and alpha subunits. The chain is DNA-directed RNA polymerase subunit omega (rpoZ) from Rickettsia prowazekii (strain Madrid E).